The sequence spans 215 residues: Cytochrome b6 (215 aa).

A helical membrane pass occupies residues 32–52 (IFYCLGGITFTCFIIQVATGF). Cysteine 35 is a heme c binding site. Residues histidine 86 and histidine 100 each coordinate heme b. The next 3 membrane-spanning stretches (helical) occupy residues 90-110 (ASMMVLMMILHVCRVYLTGGF), 116-136 (LTWVTGIILAILTVSFGVTGY), and 186-206 (LHTFVLPLLTATFMLGHFLMI). Heme b-binding residues include histidine 187 and histidine 202.

The protein belongs to the cytochrome b family. PetB subfamily. As to quaternary structure, the 4 large subunits of the cytochrome b6-f complex are cytochrome b6, subunit IV (17 kDa polypeptide, PetD), cytochrome f and the Rieske protein, while the 4 small subunits are PetG, PetL, PetM and PetN. The complex functions as a dimer. Heme b serves as cofactor. Heme c is required as a cofactor.

It is found in the plastid. The protein localises to the chloroplast thylakoid membrane. Functionally, component of the cytochrome b6-f complex, which mediates electron transfer between photosystem II (PSII) and photosystem I (PSI), cyclic electron flow around PSI, and state transitions. The polypeptide is Cytochrome b6 (Euglena gracilis).